The primary structure comprises 143 residues: Large ribosomal subunit protein uL16c (143 aa).

Belongs to the universal ribosomal protein uL16 family. In terms of assembly, part of the 50S ribosomal subunit.

It localises to the plastid. The protein resides in the chloroplast. This Chlorokybus atmophyticus (Soil alga) protein is Large ribosomal subunit protein uL16c.